Here is a 504-residue protein sequence, read N- to C-terminus: MLFLEVKFLDLDLEANAVIINEEDIKGTAYYSQDRVLIESKTCSFIGTLQSTKTMIKPGEVGVSKYIKDVKLNEGEEVRVRHAQKPQSVSYIRKKMNGQTLTADEIHTIIDEIVSKKLTNVELSAFLVSTYIRGMNTEEIVAMTKRMAETGDTIQWEKRPVVDVHSIGGVPGNKYALLTIPIVAAAGMTIPKTSSRAITSAAGTADVLEVITNVNLSCEEIQRVAKTTGGCLAWGGAVNLAPADDIIINVERPLSIDPQPQLLASVMAKKIATGIDYTVIDIPVGYGVKIKNEKEGNQLARKFIELGELLGIRVECVLTYGGQPIGRAIGPALEIKEALMALHDPKSAPNSLIEKSVSLAGVLLELGGRAQIGQGQKVAWEILESGKALEKFNEIVVEQGGTITKPEEIELGEYTMDIRSPKDGYVTGISNKLITKLAKEAGCPKDKKAGIFLGVKTGNKVNKEDILYTIYSSSEERLDAAVNFARRTYPIKVEGMMLKRLSKF.

AMP is bound by residues Gly169, 195–200, and Thr204; that span reads SRAITS. Asp257 serves as the catalytic Proton donor. Residues Ser265 and Lys289 each coordinate AMP.

Belongs to the thymidine/pyrimidine-nucleoside phosphorylase family. Type 2 subfamily.

The enzyme catalyses AMP + phosphate = alpha-D-ribose 1,5-bisphosphate + adenine. It carries out the reaction CMP + phosphate = cytosine + alpha-D-ribose 1,5-bisphosphate. It catalyses the reaction UMP + phosphate = alpha-D-ribose 1,5-bisphosphate + uracil. Catalyzes the conversion of AMP and phosphate to adenine and ribose 1,5-bisphosphate (R15P). Exhibits phosphorylase activity toward CMP and UMP in addition to AMP. Functions in an archaeal AMP degradation pathway, together with R15P isomerase and RubisCO. This Methanococcus aeolicus (strain ATCC BAA-1280 / DSM 17508 / OCM 812 / Nankai-3) protein is AMP phosphorylase.